Here is a 375-residue protein sequence, read N- to C-terminus: Alcohol dehydrogenase 6 (375 aa).

Positions 47, 69, 99, 102, 105, 113, and 175 each coordinate Zn(2+). Residues 200-205, D224, K229, 293-295, and R370 contribute to the NAD(+) site; these read GLGGVG and VGS.

It belongs to the zinc-containing alcohol dehydrogenase family. Class-V subfamily. As to quaternary structure, dimer. The cofactor is Zn(2+). Liver.

The protein resides in the cytoplasm. The enzyme catalyses a primary alcohol + NAD(+) = an aldehyde + NADH + H(+). The catalysed reaction is a secondary alcohol + NAD(+) = a ketone + NADH + H(+). In terms of biological role, alcohol dehydrogenase. Catalyzes the NAD-dependent oxidation of primary alcohols to the corresponding aldehydes. Oxidizes secondary alcohols to the corresponding ketones. In Peromyscus maniculatus (North American deer mouse), this protein is Alcohol dehydrogenase 6 (ADH6).